Consider the following 219-residue polypeptide: Phosphate-specific transport system accessory protein PhoU homolog 1 (219 aa).

Belongs to the PhoU family. As to quaternary structure, homodimer.

The protein resides in the cytoplasm. Functionally, plays a role in the regulation of phosphate uptake. The polypeptide is Phosphate-specific transport system accessory protein PhoU homolog 1 (Methanothermobacter thermautotrophicus (strain ATCC 29096 / DSM 1053 / JCM 10044 / NBRC 100330 / Delta H) (Methanobacterium thermoautotrophicum)).